Consider the following 626-residue polypeptide: Elongation factor 4 (626 aa).

In terms of domain architecture, tr-type G spans 14 to 195; the sequence is SLIRNFCIIA…RIVVDVPAPT (182 aa). GTP contacts are provided by residues 26–31 and 142–145; these read DHGKST and NKID. Residues 603 to 626 form a disordered region; sequence LSTGEGGNDRDTKDKIRAAQKSEG. Residues 609 to 626 show a composition bias toward basic and acidic residues; it reads GNDRDTKDKIRAAQKSEG.

This sequence belongs to the TRAFAC class translation factor GTPase superfamily. Classic translation factor GTPase family. LepA subfamily.

The protein resides in the cell membrane. It catalyses the reaction GTP + H2O = GDP + phosphate + H(+). In terms of biological role, required for accurate and efficient protein synthesis under certain stress conditions. May act as a fidelity factor of the translation reaction, by catalyzing a one-codon backward translocation of tRNAs on improperly translocated ribosomes. Back-translocation proceeds from a post-translocation (POST) complex to a pre-translocation (PRE) complex, thus giving elongation factor G a second chance to translocate the tRNAs correctly. Binds to ribosomes in a GTP-dependent manner. This chain is Elongation factor 4, found in Bifidobacterium animalis subsp. lactis (strain AD011).